Consider the following 169-residue polypeptide: Acetolactate synthase small subunit (169 aa).

An ACT domain is found at 8 to 85 (TLSVLVEDTP…KVVEQEADNS (78 aa)).

This sequence belongs to the acetolactate synthase small subunit family. As to quaternary structure, dimer of large and small chains.

The enzyme catalyses 2 pyruvate + H(+) = (2S)-2-acetolactate + CO2. Its pathway is amino-acid biosynthesis; L-isoleucine biosynthesis; L-isoleucine from 2-oxobutanoate: step 1/4. The protein operates within amino-acid biosynthesis; L-valine biosynthesis; L-valine from pyruvate: step 1/4. The sequence is that of Acetolactate synthase small subunit (ilvH) from Mycobacterium leprae (strain TN).